The sequence spans 1014 residues: Klotho (1014 aa).

The first 34 residues, 1 to 34, serve as a signal peptide directing secretion; the sequence is MLARAPPRRPPRLVLLRLLLLHLLLLALRARCLS. The Extracellular portion of the chain corresponds to 35–982; the sequence is AEPGQGAQTW…TECGFFQTRK (948 aa). Glycosyl hydrolase-1 stretches follow at residues 59-508 and 517-955; these read LHDT…DNGF and LEGT…SNGF. N-linked (GlcNAc...) asparagine glycans are attached at residues asparagine 161, asparagine 285, asparagine 346, asparagine 609, asparagine 614, and asparagine 696. Residues 983 to 1003 traverse the membrane as a helical segment; the sequence is SLLVFISFLVFTFIISLALIF. The Cytoplasmic segment spans residues 1004–1014; sequence HYSKKGQRSYK.

The protein belongs to the glycosyl hydrolase 1 family. Klotho subfamily. As to quaternary structure, homodimer. Interacts with FGF23 and FGFR1. N-glycosylated. As to expression, membrane-bound protein is present in distal renal tubules, inner ear, ependymal cells of brain choroid plexus, elongating spermatids and mature oocytes (at protein level). Soluble peptide is present in serum (100 pM) and cerebrospinal fluid. Expressed strongly in kidney, moderately in brain choroid plexus, and at low levels in pituitary, placenta, skeletal muscle, urinary bladder, aorta, pancreas, testis, ovary, colon, thyroid gland and adipocytes.

Its subcellular location is the cell membrane. It localises to the apical cell membrane. It is found in the secreted. The catalysed reaction is a beta-D-glucuronoside + H2O = D-glucuronate + an alcohol. Inhibited by D-saccharic acid 1,4-lactone and taurocholic acid. In terms of biological role, may have weak glycosidase activity towards glucuronylated steroids. However, it lacks essential active site Glu residues at positions 241 and 874, suggesting it may be inactive as a glycosidase in vivo. May be involved in the regulation of calcium and phosphorus homeostasis by inhibiting the synthesis of active vitamin D. Essential factor for the specific interaction between FGF23 and FGFR1. The Klotho peptide generated by cleavage of the membrane-bound isoform may be an anti-aging circulating hormone which would extend life span by inhibiting insulin/IGF1 signaling. This is Klotho (Kl) from Mus musculus (Mouse).